A 371-amino-acid chain; its full sequence is Histidinol-phosphate aminotransferase (371 aa).

Lys227 is subject to N6-(pyridoxal phosphate)lysine.

This sequence belongs to the class-II pyridoxal-phosphate-dependent aminotransferase family. Histidinol-phosphate aminotransferase subfamily. As to quaternary structure, homodimer. The cofactor is pyridoxal 5'-phosphate.

The enzyme catalyses L-histidinol phosphate + 2-oxoglutarate = 3-(imidazol-4-yl)-2-oxopropyl phosphate + L-glutamate. It functions in the pathway amino-acid biosynthesis; L-histidine biosynthesis; L-histidine from 5-phospho-alpha-D-ribose 1-diphosphate: step 7/9. The polypeptide is Histidinol-phosphate aminotransferase (Sphingopyxis alaskensis (strain DSM 13593 / LMG 18877 / RB2256) (Sphingomonas alaskensis)).